The sequence spans 252 residues: Tumor necrosis factor ligand superfamily member 15 (252 aa).

At 1–39 (MAEELGLGFGEGVPVEVLPEGCRHRPEARAGLAARSKAC) the chain is on the cytoplasmic side. A helical; Signal-anchor for type II membrane protein membrane pass occupies residues 40-60 (LALTCCLLSFPILAGLSTLLM). Topologically, residues 61–252 (AGQLRVPGKD…DKTFFGAFLL (192 aa)) are extracellular. Positions 96 to 252 (PRAHLTIKKQ…DKTFFGAFLL (157 aa)) constitute a THD domain. An N-linked (GlcNAc...) asparagine glycan is attached at Asn137. A disulfide bridge connects residues Cys163 and Cys203. The N-linked (GlcNAc...) asparagine glycan is linked to Asn230.

The protein belongs to the tumor necrosis factor family. Homotrimer.

The protein localises to the membrane. Receptor for TNFRSF25 and TNFRSF6B. Mediates activation of NF-kappa-B. Inhibits vascular endothelial growth and angiogenesis (in vitro). Promotes activation of caspases and apoptosis. Promotes splenocyte alloactivation. The chain is Tumor necrosis factor ligand superfamily member 15 (Tnfsf15) from Mus musculus (Mouse).